The primary structure comprises 260 residues: Type III pantothenate kinase (260 aa).

6-13 (DVGNTNIT) serves as a coordination point for ATP. 107–110 (GADR) provides a ligand contact to substrate. Aspartate 109 functions as the Proton acceptor in the catalytic mechanism. Aspartate 129 is a binding site for K(+). Threonine 132 serves as a coordination point for ATP. Substrate is bound at residue threonine 184.

This sequence belongs to the type III pantothenate kinase family. Homodimer. Requires NH4(+) as cofactor. It depends on K(+) as a cofactor.

The protein resides in the cytoplasm. It catalyses the reaction (R)-pantothenate + ATP = (R)-4'-phosphopantothenate + ADP + H(+). The protein operates within cofactor biosynthesis; coenzyme A biosynthesis; CoA from (R)-pantothenate: step 1/5. Catalyzes the phosphorylation of pantothenate (Pan), the first step in CoA biosynthesis. This is Type III pantothenate kinase from Agathobacter rectalis (strain ATCC 33656 / DSM 3377 / JCM 17463 / KCTC 5835 / VPI 0990) (Eubacterium rectale).